The chain runs to 378 residues: Chaperone protein DnaJ (378 aa).

One can recognise a J domain in the interval 5–69; that stretch reads EYYDRLGVSK…QKRAAYDQYG (65 aa). A CR-type zinc finger spans residues 134-216; it reads GVEKEVSYNR…CHGTGHEKQA (83 aa). Residues cysteine 147, cysteine 150, cysteine 164, cysteine 167, cysteine 190, cysteine 193, cysteine 204, and cysteine 207 each contribute to the Zn(2+) site. 4 CXXCXGXG motif repeats span residues 147-154, 164-171, 190-197, and 204-211; these read CGTCLGSG, CRKCHGSG, CDICHGSG, and CQTCHGTG.

The protein belongs to the DnaJ family. As to quaternary structure, homodimer. The cofactor is Zn(2+).

It localises to the cytoplasm. Participates actively in the response to hyperosmotic and heat shock by preventing the aggregation of stress-denatured proteins and by disaggregating proteins, also in an autonomous, DnaK-independent fashion. Unfolded proteins bind initially to DnaJ; upon interaction with the DnaJ-bound protein, DnaK hydrolyzes its bound ATP, resulting in the formation of a stable complex. GrpE releases ADP from DnaK; ATP binding to DnaK triggers the release of the substrate protein, thus completing the reaction cycle. Several rounds of ATP-dependent interactions between DnaJ, DnaK and GrpE are required for fully efficient folding. Also involved, together with DnaK and GrpE, in the DNA replication of plasmids through activation of initiation proteins. The chain is Chaperone protein DnaJ from Streptococcus pyogenes.